A 476-amino-acid chain; its full sequence is Rifampicin monooxygenase (476 aa).

FAD-binding residues include Thr12, Glu31, Lys32, Gln98, Leu122, and Thr156. Rifampicin-binding residues include Arg196 and Arg213. FAD contacts are provided by Asp277, Leu290, and Asn291.

It belongs to the rifampicin monooxygenase family. FAD serves as cofactor.

The enzyme catalyses rifampicin + NADPH + O2 = rifampicin para-naphthoquinone carboxamide + NADP(+) + H2O + H(+). The catalysed reaction is rifampicin + NADH + O2 = rifampicin para-naphthoquinone carboxamide + NAD(+) + H2O + H(+). It carries out the reaction rifamycin SV + NADPH + O2 = rifamycin SV para-naphthoquinone carboxamide + NADP(+) + H2O. It catalyses the reaction rifamycin SV + NADH + O2 = rifamycin SV para-naphthoquinone carboxamide + NAD(+) + H2O. Functionally, monooxygenase that can modify rifampicin, thereby inactivating its antibiotic activity. Inactivates a broad range of rifamycin antibiotics. The sequence is that of Rifampicin monooxygenase from Streptomyces venezuelae (strain ATCC 10712 / CBS 650.69 / DSM 40230 / JCM 4526 / NBRC 13096 / PD 04745).